A 424-amino-acid polypeptide reads, in one-letter code: MAKLTGMFSAAILLSMAICSTAIIYRGEHMSMYLNASSEFAVYPTDQSLVLVGHLLFLDGQRLPTTNYSGLIELIHYNYSSVCYTVIQTISYESCPRVANNAFRSCLHKTSKHYHDYFRVNASVETNVLLNITKPQPTDSGAYILRVKLDHAPTADVFGVSAFVYDLKSKTVPDPMPTTQTVEPTTSYVSTPTYDYTDDVTTETESTSTSTQQAMTSTQTPSATWGTQLTTELPTNETVVIGQEALLCHWFQPSTRVPTLYLHLLGRTGNLPEDVLLVEDSEFLRTTSPAHRPSASPADGDDFKQTNSTSLKARNKIVAMVVIPTACVLMLLLVVVGAIINGAVRKHLLSCASRRIYRSGQGGASAAERRRLTCGPTLAASSESLADDTTSSPPTPKPSKKTKLETDPLMEQLNRKLEAIKEES.

Residues 1 to 22 form the signal peptide; it reads MAKLTGMFSAAILLSMAICSTA. Over 23–319 the chain is Virion surface; it reads IIYRGEHMSM…SLKARNKIVA (297 aa). 5 N-linked (GlcNAc...) asparagine; by host glycosylation sites follow: Asn35, Asn67, Asn78, Asn121, and Asn131. Residues 192–223 are disordered; it reads PTYDYTDDVTTETESTSTSTQQAMTSTQTPSA. The span at 203-223 shows a compositional bias: low complexity; the sequence is ETESTSTSTQQAMTSTQTPSA. Asn236 is a glycosylation site (N-linked (GlcNAc...) asparagine; by host). Residues 287-306 are disordered; the sequence is TSPAHRPSASPADGDDFKQT. Asn307 is a glycosylation site (N-linked (GlcNAc...) asparagine; by host). Residues 320–340 form a helical membrane-spanning segment; sequence MVVIPTACVLMLLLVVVGAII. Over 341-424 the chain is Intravirion; sequence NGAVRKHLLS…RKLEAIKEES (84 aa). The segment at 377 to 408 is disordered; that stretch reads TLAASSESLADDTTSSPPTPKPSKKTKLETDP. A compositionally biased stretch (polar residues) spans 379–388; that stretch reads AASSESLADD.

This sequence belongs to the alphaherpesvirinae glycoprotein I family. As to quaternary structure, interacts with gE.

It is found in the virion membrane. The protein resides in the host cell membrane. Its subcellular location is the host cell junction. It localises to the host Golgi apparatus membrane. Its function is as follows. In epithelial cells, the heterodimer gE/gI is required for the cell-to-cell spread of the virus, by sorting nascent virions to cell junctions. Once the virus reaches the cell junctions, virus particles can spread to adjacent cells extremely rapidly through interactions with cellular receptors that accumulate at these junctions. Implicated in basolateral spread in polarized cells. In neuronal cells, gE/gI is essential for the anterograde spread of the infection throughout the host nervous system. Together with US9, the heterodimer gE/gI is involved in the sorting and transport of viral structural components toward axon tips. This Equine herpesvirus 1 (strain AB1) (EHV-1) protein is Envelope glycoprotein I (gI).